A 259-amino-acid chain; its full sequence is DNA-directed RNA polymerase 30 kDa polypeptide (259 aa).

The segment at 155-195 (YNTPCPNCKSRNTTPMMIQTRAADEPPLVRHACRDCKQHFK) adopts a TFIIS-type zinc-finger fold. 4 residues coordinate Zn(2+): Cys-159, Cys-162, Cys-187, and Cys-190. Residues 220-259 (EILPDNNPSPPESPEPASPIDDGLIRATFDRNDEPPEDDE) form a disordered region. The segment covering 226–236 (NPSPPESPEPA) has biased composition (pro residues).

It belongs to the poxviridae DNA-directed RNA polymerase 30 kDa subunit family. As to quaternary structure, the DNA-dependent RNA polymerase (vRNAP) consists of eight subunits encoded by early viral genes and termed according to their apparent molecular masses Rpo147, Rpo132, Rpo35, Rpo30, Rpo22, Rpo19, Rpo18, and Rpo7. The same holoenzyme, with the addition of the transcription-specificity factor RAP94, is used for early gene expression.

The protein resides in the virion. The protein localises to the host cytoplasm. The enzyme catalyses RNA(n) + a ribonucleoside 5'-triphosphate = RNA(n+1) + diphosphate. Part of the DNA-dependent RNA polymerase which catalyzes the transcription of viral DNA into RNA using the four ribonucleoside triphosphates as substrates. Responsible for the transcription of early, intermediate and late genes. DNA-dependent RNA polymerase associates with the early transcription factor (ETF), itself composed of OPG118 and OPG134, thereby allowing the early genes transcription. Late transcription, and probably also intermediate transcription, require newly synthesized RNA polymerase. The protein is DNA-directed RNA polymerase 30 kDa polypeptide (OPG066) of Monkeypox virus.